The sequence spans 282 residues: uncharacterized protein (282 aa).

Helical transmembrane passes span 9 to 29 (LLKIFVVGVFPCTLFVNAPHG), 43 to 63 (ISGRVGWVLMELVAPLTFLYA), 123 to 143 (VFVSAVLFNFLNGMSIGLYLV), 158 to 178 (YIGMFLWLMGWLGNMYHDNIL), and 232 to 252 (LAAGPSAEPFWWFFLSEILLM).

This sequence belongs to the steroid 5-alpha reductase family.

The protein resides in the endoplasmic reticulum membrane. This is an uncharacterized protein from Schizosaccharomyces pombe (strain 972 / ATCC 24843) (Fission yeast).